The chain runs to 345 residues: Beta-2-glycoprotein 1 (345 aa).

Residues 1 to 19 form the signal peptide; that stretch reads MISPVLILFSSFLCHVAIA. Sushi domains follow at residues 21 to 81, 82 to 139, 140 to 202, and 203 to 262; these read RTCP…KCTP, RVCP…VCAP, ITCP…ECRE, and VKCP…SCKA. Cystine bridges form between Cys-23–Cys-66, Cys-51–Cys-79, Cys-84–Cys-124, Cys-110–Cys-137, Cys-142–Cys-188, Cys-174–Cys-200, Cys-205–Cys-248, Cys-234–Cys-260, Cys-264–Cys-315, Cys-300–Cys-325, and Cys-307–Cys-345. O-linked (GalNAc...) threonine glycosylation is present at Thr-33. Residue Thr-149 is glycosylated (O-linked (GalNAc...) threonine). Residues Asn-162, Asn-183, and Asn-193 are each glycosylated (N-linked (GlcNAc...) asparagine). Asn-253 is a glycosylation site (N-linked (GlcNAc...) asparagine). The tract at residues 263–345 is sushi-like; the sequence is SCKVPVKKAT…KTDASDVKPC (83 aa).

As to expression, expressed by the liver and secreted in plasma.

The protein localises to the secreted. Binds to various kinds of negatively charged substances such as heparin, phospholipids, and dextran sulfate. May prevent activation of the intrinsic blood coagulation cascade by binding to phospholipids on the surface of damaged cells. The polypeptide is Beta-2-glycoprotein 1 (APOH) (Pan troglodytes (Chimpanzee)).